Consider the following 288-residue polypeptide: CBY1-interacting BAR domain-containing protein 2 (288 aa).

The tract at residues 6–217 is BAR-like; it reads SRDSQVRVME…ESYDLEKDLE (212 aa). Disordered stretches follow at residues 133 to 157 and 256 to 288; these read QKSP…VDAS and TIRS…RLNQ. Positions 138 to 157 are enriched in polar residues; it reads DRQTISQAETSVQRASVDAS. A compositionally biased stretch (acidic residues) spans 266-276; the sequence is SEDDSAEEDPV.

This sequence belongs to the CIBAR family. In terms of assembly, homodimer (via BAR-like domain). Heterodimer (via BAR-like domain) with FAM92A. Interacts with CBY1.

It is found in the cytoplasm. It localises to the cytoskeleton. The protein localises to the microtubule organizing center. The protein resides in the centrosome. Its subcellular location is the centriole. It is found in the cilium basal body. Functionally, may play a role in ciliogenesis. In cooperation with CBY1 may facilitate ciliogenesis likely by the recruitment and fusion of endosomal vesicles at distal appendages during early stages of ciliogenesis. The chain is CBY1-interacting BAR domain-containing protein 2 (CIBAR2) from Bos taurus (Bovine).